The following is an 82-amino-acid chain: Myosin light chain alkali (82 aa).

One can recognise an EF-hand domain in the interval 7-42; that stretch reads GCYGDFIECLKLYDKEENGTMMLAELQHALLALGES.

Myosin is a hexamer of 2 heavy chains and 4 light chains.

The polypeptide is Myosin light chain alkali (Mlc1) (Drosophila sechellia (Fruit fly)).